The sequence spans 424 residues: Serine--tRNA ligase (424 aa).

Position 230–232 (230–232) interacts with L-serine; sequence TAE. 261-263 is a binding site for ATP; it reads RSE. L-serine is bound at residue Glu284. 348 to 351 lines the ATP pocket; that stretch reads EISS. Ser384 provides a ligand contact to L-serine.

The protein belongs to the class-II aminoacyl-tRNA synthetase family. Type-1 seryl-tRNA synthetase subfamily. In terms of assembly, homodimer. The tRNA molecule binds across the dimer.

The protein localises to the cytoplasm. The enzyme catalyses tRNA(Ser) + L-serine + ATP = L-seryl-tRNA(Ser) + AMP + diphosphate + H(+). The catalysed reaction is tRNA(Sec) + L-serine + ATP = L-seryl-tRNA(Sec) + AMP + diphosphate + H(+). It participates in aminoacyl-tRNA biosynthesis; selenocysteinyl-tRNA(Sec) biosynthesis; L-seryl-tRNA(Sec) from L-serine and tRNA(Sec): step 1/1. Functionally, catalyzes the attachment of serine to tRNA(Ser). Is also able to aminoacylate tRNA(Sec) with serine, to form the misacylated tRNA L-seryl-tRNA(Sec), which will be further converted into selenocysteinyl-tRNA(Sec). The sequence is that of Serine--tRNA ligase from Streptococcus pneumoniae (strain Hungary19A-6).